The sequence spans 547 residues: CAP-Gly domain-containing linker protein 3 (547 aa).

The disordered stretch occupies residues 1–49; the sequence is MTKTDPAPMAPPPRGEEEEEEEEDEPVPEAPSPTQERRQKPVVHPSAPA. The segment covering 16 to 27 has biased composition (acidic residues); the sequence is EEEEEEEEDEPV. 3 ANK repeats span residues 117-158, 160-191, and 197-229; these read TDMT…LRSR, TNMN…VVNS, and NHGS…LRNR. Residues 314–356 enclose the CAP-Gly 1 domain; it reads GTTEFASGQWVGVELDEPEGKNDGSVGGVRYFICPPKQGLFAS. The segment at 365 to 413 is disordered; sequence DAPPSSVTSTPRTPRMDFSRVTGKGRREHKGKKKSPSSPSLGSLQQREG. The segment covering 367–377 has biased composition (low complexity); sequence PPSSVTSTPRT. Threonine 374 bears the Phosphothreonine mark. Basic residues predominate over residues 387–399; the sequence is GKGRREHKGKKKS. 2 positions are modified to phosphoserine: serine 399 and serine 401. One can recognise a CAP-Gly 2 domain in the interval 436–478; sequence GKTDFAPGYWYGIELDQPTGKHDGSVFGVRYFTCAPRHGVFAP. The goLD stretch occupies residues 488–547; that stretch reads STDPPGDSVGAKKVHQVTMTQPKRTFTTVRTPKDIASENSISRLLFCCWFPWMLRAEMQS. S-palmitoyl cysteine attachment occurs at residues cysteine 534 and cysteine 535.

Homodimer. Interacts with AKT1 and AKT2; when AKT1 and AKT2 are phosphorylated and activated, affinity is higher for AKT2. Interacts with ZDHHC13 (via ANK repeats). Interacts with ZDHHC17 (via ANK repeats). Palmitoylation by ZDHHC17 regulates association with the plasma membrane.

Its subcellular location is the cell membrane. It localises to the cytoplasm. It is found in the golgi apparatus. The protein localises to the golgi stack. Functionally, functions as a cytoplasmic linker protein. Involved in TGN-endosome dynamics. May modulate the cellular compartmentalization of AKT kinase family and promote its cell membrane localization, thereby playing a role in glucose transport in adipocytes. This is CAP-Gly domain-containing linker protein 3 (Clip3) from Mus musculus (Mouse).